Consider the following 232-residue polypeptide: 2-C-methyl-D-erythritol 4-phosphate cytidylyltransferase (232 aa).

It belongs to the IspD/TarI cytidylyltransferase family. IspD subfamily.

It catalyses the reaction 2-C-methyl-D-erythritol 4-phosphate + CTP + H(+) = 4-CDP-2-C-methyl-D-erythritol + diphosphate. The protein operates within isoprenoid biosynthesis; isopentenyl diphosphate biosynthesis via DXP pathway; isopentenyl diphosphate from 1-deoxy-D-xylulose 5-phosphate: step 2/6. Catalyzes the formation of 4-diphosphocytidyl-2-C-methyl-D-erythritol from CTP and 2-C-methyl-D-erythritol 4-phosphate (MEP). The chain is 2-C-methyl-D-erythritol 4-phosphate cytidylyltransferase from Deinococcus radiodurans (strain ATCC 13939 / DSM 20539 / JCM 16871 / CCUG 27074 / LMG 4051 / NBRC 15346 / NCIMB 9279 / VKM B-1422 / R1).